Consider the following 360-residue polypeptide: Putative agmatine deiminase (360 aa).

The Amidino-cysteine intermediate role is filled by Cys-353.

This sequence belongs to the agmatine deiminase family.

It catalyses the reaction agmatine + H2O = N-carbamoylputrescine + NH4(+). This chain is Putative agmatine deiminase, found in Vibrio parahaemolyticus serotype O3:K6 (strain RIMD 2210633).